Here is a 581-residue protein sequence, read N- to C-terminus: MAVTLVTSCASSSRFHFRSFSSSPSSLSSCFVRFQLLSRLRVSFAITPLYCSSKATAHTIAHATLGLTQANSVDHPKISFSGKEIDVTEWKGDILAVGVTEKDMAKDANSKFENPILKKLDAHLGGLLADVSAEEDFSGKPGQSTVLRLPGLGSKRVGLIGLGKSASTPSAFQSLGEAVAAAAKASQASSVAVVLASSESFSDESKLSSASDIASGTVLGLFEDSRYKSESKKPSLKSVVFIGFGTGPELENKLKYAEHVSYGVIFTKELVNSPANVLSPAVLAEEASNLASMYSNVMTANILKEEQCKELKMGSYLAVAAASANPPHFIHLIYKPSSGPVKTKLALVGKGLTFDSGGYNIKIGPELIIELMKIDVGGSAAVLGAAKAIGEIKPPGVEVHFIVAACENMISGTGMRPGDVITASNGKTIEVNDTDSEGRLTLADALVYACNQGVDKIVDIATLTGEIIVALGPSMAGMYTASDELAKEVIAASQRSGEKLWRMPMEESYWEMMKSGVADMVNFGGRAGGSITAALFLKRFVSENVEWLHIDMAGRVWNEKKKAATGFGVATLVEWVQNNSS.

The transit peptide at 1 to 50 directs the protein to the chloroplast; that stretch reads MAVTLVTSCASSSRFHFRSFSSSPSSLSSCFVRFQLLSRLRVSFAITPLY. Mn(2+) contacts are provided by Lys350 and Asp355. The active site involves Lys362. Mn(2+) is bound by residues Asp375, Asp435, and Glu437. Arg439 is a catalytic residue.

This sequence belongs to the peptidase M17 family. Homohexamer (dimer of homotrimers). Mn(2+) is required as a cofactor.

The protein localises to the plastid. The protein resides in the chloroplast. It catalyses the reaction Release of an N-terminal amino acid, Xaa-|-Yaa-, in which Xaa is preferably Leu, but may be other amino acids including Pro although not Arg or Lys, and Yaa may be Pro. Amino acid amides and methyl esters are also readily hydrolyzed, but rates on arylamides are exceedingly low.. The catalysed reaction is Release of N-terminal proline from a peptide.. Presumably involved in the processing and regular turnover of intracellular proteins. Catalyzes the removal of unsubstituted N-terminal amino acids from various peptides. Possesses Cys-Gly dipeptidase activity. This chain is Leucine aminopeptidase 3, chloroplastic, found in Arabidopsis thaliana (Mouse-ear cress).